The chain runs to 62 residues: UPF0434 protein azo1471 (62 aa).

The protein belongs to the UPF0434 family.

This chain is UPF0434 protein azo1471, found in Azoarcus sp. (strain BH72).